A 267-amino-acid polypeptide reads, in one-letter code: Hydroxyethylthiazole kinase (267 aa).

Met-46 contributes to the substrate binding site. ATP contacts are provided by Arg-121 and Thr-167. Ala-194 serves as a coordination point for substrate.

It belongs to the Thz kinase family. Mg(2+) serves as cofactor.

It catalyses the reaction 5-(2-hydroxyethyl)-4-methylthiazole + ATP = 4-methyl-5-(2-phosphooxyethyl)-thiazole + ADP + H(+). It functions in the pathway cofactor biosynthesis; thiamine diphosphate biosynthesis; 4-methyl-5-(2-phosphoethyl)-thiazole from 5-(2-hydroxyethyl)-4-methylthiazole: step 1/1. Functionally, catalyzes the phosphorylation of the hydroxyl group of 4-methyl-5-beta-hydroxyethylthiazole (THZ). This is Hydroxyethylthiazole kinase from Rhizobium johnstonii (strain DSM 114642 / LMG 32736 / 3841) (Rhizobium leguminosarum bv. viciae).